The sequence spans 407 residues: Argininosuccinate synthase (407 aa).

ATP contacts are provided by residues 10–18 and Ala-37; that span reads AYSGGLDTS. Tyr-88 and Ser-93 together coordinate L-citrulline. Residue Gly-118 coordinates ATP. Residues Thr-120, Asn-124, and Asp-125 each contribute to the L-aspartate site. Asn-124 provides a ligand contact to L-citrulline. The L-citrulline site is built by Arg-128, Ser-180, Ser-189, Glu-265, and Tyr-277.

It belongs to the argininosuccinate synthase family. Type 1 subfamily. Homotetramer.

The protein localises to the cytoplasm. The catalysed reaction is L-citrulline + L-aspartate + ATP = 2-(N(omega)-L-arginino)succinate + AMP + diphosphate + H(+). The protein operates within amino-acid biosynthesis; L-arginine biosynthesis; L-arginine from L-ornithine and carbamoyl phosphate: step 2/3. The polypeptide is Argininosuccinate synthase (Alcanivorax borkumensis (strain ATCC 700651 / DSM 11573 / NCIMB 13689 / SK2)).